Here is a 278-residue protein sequence, read N- to C-terminus: Probable endonuclease 4 (278 aa).

Zn(2+) contacts are provided by His66, His106, Glu140, Asp172, His175, His209, Asp222, His224, and Glu254.

This sequence belongs to the AP endonuclease 2 family. It depends on Zn(2+) as a cofactor.

The enzyme catalyses Endonucleolytic cleavage to 5'-phosphooligonucleotide end-products.. In terms of biological role, endonuclease IV plays a role in DNA repair. It cleaves phosphodiester bonds at apurinic or apyrimidinic (AP) sites, generating a 3'-hydroxyl group and a 5'-terminal sugar phosphate. The protein is Probable endonuclease 4 of Haloquadratum walsbyi (strain DSM 16790 / HBSQ001).